A 447-amino-acid polypeptide reads, in one-letter code: N-succinylarginine dihydrolase (447 aa).

Substrate contacts are provided by residues 19–28 (AGLSFGNEAS), Asn-110, and 137–138 (HR). Glu-174 is a catalytic residue. Residue Arg-212 participates in substrate binding. Residue His-248 is part of the active site. Substrate contacts are provided by Asp-250 and Asn-359. Cys-365 acts as the Nucleophile in catalysis.

This sequence belongs to the succinylarginine dihydrolase family. As to quaternary structure, homodimer.

The enzyme catalyses N(2)-succinyl-L-arginine + 2 H2O + 2 H(+) = N(2)-succinyl-L-ornithine + 2 NH4(+) + CO2. Its pathway is amino-acid degradation; L-arginine degradation via AST pathway; L-glutamate and succinate from L-arginine: step 2/5. Catalyzes the hydrolysis of N(2)-succinylarginine into N(2)-succinylornithine, ammonia and CO(2). The protein is N-succinylarginine dihydrolase of Escherichia coli O17:K52:H18 (strain UMN026 / ExPEC).